The sequence spans 674 residues: Cysteine-rich receptor-like protein kinase 6 (674 aa).

The signal sequence occupies residues 1–24; that stretch reads MSSLISFNFLFLFSFLTSSFTASA. Residues 25–289 lie on the Extracellular side of the membrane; sequence QDPFYLNHYC…LPGKSGNSTV (265 aa). Gnk2-homologous domains follow at residues 28–132 and 139–245; these read FYLN…HKNI and NEGE…LYPF. 7 N-linked (GlcNAc...) asparagine glycosylation sites follow: N36, N43, N61, N70, N104, N178, and N247. Over residues 254 to 266 the composition is skewed to pro residues; the sequence is PPLPPPPPPPPPR. The tract at residues 254–284 is disordered; it reads PPLPPPPPPPPPRESLVSTPPISSSSLPGKS. The span at 268–284 shows a compositional bias: low complexity; it reads SLVSTPPISSSSLPGKS. The N-linked (GlcNAc...) asparagine glycan is linked to N286. The chain crosses the membrane as a helical span at residues 290-310; the sequence is LVVAVVVLAVLLFIALVGYCF. At 311–674 the chain is on the cytoplasmic side; the sequence is LAKKKKKTFD…DESITDLYPR (364 aa). The Protein kinase domain occupies 351-637; that stretch reads FAESNKIGRG…TLPVPRQPGF (287 aa). ATP-binding positions include 357 to 365 and K379; that span reads IGRGGFGEV. Y424 bears the Phosphotyrosine mark. D476 acts as the Proton acceptor in catalysis. S480 is modified (phosphoserine). Phosphothreonine is present on T516. Y524 carries the phosphotyrosine modification. Positions 648 to 674 are disordered; the sequence is LDSDQSTTTKSFPASIDDESITDLYPR. Residues 650–659 show a composition bias toward polar residues; that stretch reads SDQSTTTKSF.

Belongs to the protein kinase superfamily. Ser/Thr protein kinase family. CRK subfamily.

It localises to the membrane. It carries out the reaction L-seryl-[protein] + ATP = O-phospho-L-seryl-[protein] + ADP + H(+). It catalyses the reaction L-threonyl-[protein] + ATP = O-phospho-L-threonyl-[protein] + ADP + H(+). The protein is Cysteine-rich receptor-like protein kinase 6 (CRK6) of Arabidopsis thaliana (Mouse-ear cress).